A 92-amino-acid chain; its full sequence is Small ribosomal subunit protein uS19 (92 aa).

The protein belongs to the universal ribosomal protein uS19 family.

In terms of biological role, protein S19 forms a complex with S13 that binds strongly to the 16S ribosomal RNA. The chain is Small ribosomal subunit protein uS19 from Rhodopseudomonas palustris (strain BisA53).